Consider the following 347-residue polypeptide: Phenylalanine--tRNA ligase alpha subunit (347 aa).

Residue E265 participates in Mg(2+) binding.

The protein belongs to the class-II aminoacyl-tRNA synthetase family. Phe-tRNA synthetase alpha subunit type 1 subfamily. In terms of assembly, tetramer of two alpha and two beta subunits. Requires Mg(2+) as cofactor.

The protein resides in the cytoplasm. It catalyses the reaction tRNA(Phe) + L-phenylalanine + ATP = L-phenylalanyl-tRNA(Phe) + AMP + diphosphate + H(+). The polypeptide is Phenylalanine--tRNA ligase alpha subunit (Wolbachia pipientis wMel).